Consider the following 482-residue polypeptide: Rhamnulokinase (482 aa).

ATP is bound at residue 13–17 (ASSGR). Residues G83 and 232 to 234 (HDT) each bind substrate. The active-site Proton acceptor is D233. T255 lines the ATP pocket. N292 lines the substrate pocket. ATP is bound at residue N300. Cysteines 349 and 366 form a disulfide. Residue G398 participates in ATP binding. C409 and C413 form a disulfide bridge.

The protein belongs to the rhamnulokinase family. Requires Mg(2+) as cofactor.

It catalyses the reaction L-rhamnulose + ATP = L-rhamnulose 1-phosphate + ADP + H(+). The protein operates within carbohydrate degradation; L-rhamnose degradation; glycerone phosphate from L-rhamnose: step 2/3. Functionally, involved in the catabolism of L-rhamnose (6-deoxy-L-mannose). Catalyzes the transfer of the gamma-phosphate group from ATP to the 1-hydroxyl group of L-rhamnulose to yield L-rhamnulose 1-phosphate. The polypeptide is Rhamnulokinase (Mannheimia succiniciproducens (strain KCTC 0769BP / MBEL55E)).